Reading from the N-terminus, the 332-residue chain is MKIVFAGTPEFAAQAVRAIHAAGHEIVLAFTQPDRRAGRGMHLQASPVKEFALQKNIPILQPETLRRTSADPQKKAQAEEAYKSLSAIEFDAMVVVAYGLILPQEILDITEKPGRHGSFNIHASLLPRWRGAAPIQRAIEAGDAKTGVCIMQMDAGLDTGDTVLVVELDIARDETSASLHDRLAGLGADLIVNALDVLQQGKTMIRSPQAIKGITYAEKILKSEAEIDWTLSAQEIDQRIRAFNPFPGASSKLNGYAIKLWNSRLADSQAFSMVGGAGDVLEFGRDGAYIQCGEGVLEVLEMQKPGGKKMAAKACIQPIGAGEKLLHFQLKE.

Position 124-127 (124-127 (SLLP)) interacts with (6S)-5,6,7,8-tetrahydrofolate.

The protein belongs to the Fmt family.

It carries out the reaction L-methionyl-tRNA(fMet) + (6R)-10-formyltetrahydrofolate = N-formyl-L-methionyl-tRNA(fMet) + (6S)-5,6,7,8-tetrahydrofolate + H(+). Attaches a formyl group to the free amino group of methionyl-tRNA(fMet). The formyl group appears to play a dual role in the initiator identity of N-formylmethionyl-tRNA by promoting its recognition by IF2 and preventing the misappropriation of this tRNA by the elongation apparatus. The chain is Methionyl-tRNA formyltransferase from Polynucleobacter necessarius subsp. necessarius (strain STIR1).